The chain runs to 359 residues: Elongation factor Ts 1, mitochondrial (359 aa).

Low complexity predominate over residues 323–341 (GKAAPAPKAEEPAAVAPAK). Positions 323 to 345 (GKAAPAPKAEEPAAVAPAKADAE) are disordered.

It belongs to the EF-Ts family.

It is found in the mitochondrion. Its function is as follows. Associates with the EF-Tu.GDP complex and induces the exchange of GDP to GTP. It remains bound to the aminoacyl-tRNA.EF-Tu.GTP complex up to the GTP hydrolysis stage on the ribosome. The chain is Elongation factor Ts 1, mitochondrial from Thalassiosira pseudonana (Marine diatom).